Reading from the N-terminus, the 344-residue chain is Dihydroorotate dehydrogenase (quinone) (344 aa).

FMN-binding positions include 65–69 (AGLDK) and threonine 89. Position 69 (lysine 69) interacts with substrate. A substrate-binding site is contributed by 114–118 (NRMGF). 2 residues coordinate FMN: asparagine 145 and asparagine 178. Asparagine 178 provides a ligand contact to substrate. Serine 181 acts as the Nucleophile in catalysis. Asparagine 183 contributes to the substrate binding site. Lysine 223 and threonine 251 together coordinate FMN. 252-253 (NT) is a binding site for substrate. Residues glycine 274, glycine 303, and 324 to 325 (YS) each bind FMN.

The protein belongs to the dihydroorotate dehydrogenase family. Type 2 subfamily. In terms of assembly, monomer. Requires FMN as cofactor.

The protein resides in the cell membrane. It carries out the reaction (S)-dihydroorotate + a quinone = orotate + a quinol. It functions in the pathway pyrimidine metabolism; UMP biosynthesis via de novo pathway; orotate from (S)-dihydroorotate (quinone route): step 1/1. In terms of biological role, catalyzes the conversion of dihydroorotate to orotate with quinone as electron acceptor. In Cupriavidus necator (strain ATCC 17699 / DSM 428 / KCTC 22496 / NCIMB 10442 / H16 / Stanier 337) (Ralstonia eutropha), this protein is Dihydroorotate dehydrogenase (quinone).